A 34-amino-acid polypeptide reads, in one-letter code: Photosystem II reaction center protein Psb30 (34 aa).

The helical transmembrane segment at 5 to 25 (VLAQLTVLAFVIAVGPITLIW) threads the bilayer.

It belongs to the Psb30/Ycf12 family. In terms of assembly, PSII is composed of 1 copy each of membrane proteins PsbA, PsbB, PsbC, PsbD, PsbE, PsbF, PsbH, PsbI, PsbJ, PsbK, PsbL, PsbM, PsbT, PsbX, PsbY, PsbZ, Psb30/Ycf12, peripheral proteins of the oxygen-evolving complex and a large number of cofactors. It forms dimeric complexes.

It localises to the plastid. The protein localises to the chloroplast thylakoid membrane. Functionally, a core subunit of photosystem II (PSII), probably helps stabilize the reaction center. This is Photosystem II reaction center protein Psb30 from Cyanidioschyzon merolae (strain NIES-3377 / 10D) (Unicellular red alga).